We begin with the raw amino-acid sequence, 344 residues long: Histone-lysine N-methyltransferase, H3 lysine-9 specific KMT1 (344 aa).

One can recognise a Pre-SET domain in the interval 79-174 (SGCSCAKDSE…DCPNRVVERG (96 aa)). Residues Cys81, Cys83, Cys89, Cys94, Cys96, Cys156, Cys160, Cys162, Cys166, and Cys272 each contribute to the Zn(2+) site. An SET domain is found at 177-312 (IPLEIFRTPD…EGEELTFDYV (136 aa)). Tyr311 is a binding site for S-adenosyl-L-methionine. In terms of domain architecture, Post-SET spans 328 to 344 (HMTRCLCGSKKCRKFLW). Residues Cys332, Cys334, and Cys339 each coordinate Zn(2+).

This sequence belongs to the class V-like SAM-binding methyltransferase superfamily.

It localises to the chromosome. The catalysed reaction is L-lysyl(9)-[histone H3] + 3 S-adenosyl-L-methionine = N(6),N(6),N(6)-trimethyl-L-lysyl(9)-[histone H3] + 3 S-adenosyl-L-homocysteine + 3 H(+). Its function is as follows. Histone methyltransferase that specifically trimethylates histone H3 to form H3K9me3. H3K9me3 marks chromatin regions for DNA methylation. Plays a key role in the regulation of the biosynthesis of the gamma-pyrones fusapyrone (FPY) and deoxyfusapyrone (dFPY). The sequence is that of Histone-lysine N-methyltransferase, H3 lysine-9 specific KMT1 from Fusarium mangiferae (Mango malformation disease fungus).